A 195-amino-acid chain; its full sequence is ADP-ribosylation factor L (195 aa).

The N-myristoyl glycine moiety is linked to residue G2. Residues 25–32 (GLENSGKT), 72–76 (DLLYP), and 131–134 (NKQD) contribute to the GTP site.

Belongs to the small GTPase superfamily. Arf family.

In terms of biological role, may be involved in trafficking events within the endosomal system. In Dictyostelium discoideum (Social amoeba), this protein is ADP-ribosylation factor L (arrL).